Reading from the N-terminus, the 280-residue chain is UDP-2,3-diacylglucosamine pyrophosphatase LpxI (280 aa).

Residues Ala12, 74-75 (NV), Gln169, 187-188 (TD), Lys214, and 226-233 (LPTIGVAT) each bind substrate.

Belongs to the LpxI family. As to quaternary structure, homodimer. Mg(2+) serves as cofactor.

Its subcellular location is the cell inner membrane. The enzyme catalyses UDP-2-N,3-O-bis[(3R)-3-hydroxytetradecanoyl]-alpha-D-glucosamine + H2O = 2-N,3-O-bis[(3R)-3-hydroxytetradecanoyl]-alpha-D-glucosaminyl 1-phosphate + UMP + 2 H(+). The protein operates within glycolipid biosynthesis; lipid IV(A) biosynthesis; lipid IV(A) from (3R)-3-hydroxytetradecanoyl-[acyl-carrier-protein] and UDP-N-acetyl-alpha-D-glucosamine: step 4/6. Its activity is regulated as follows. Inhibited by high concentrations of Cu(2+) and Zn(2+). Completely inhibited by EDTA in vitro. Hydrolyzes the pyrophosphate bond of UDP-2,3-diacylglucosamine to form 2,3-diacylglucosamine 1-phosphate (lipid X) and UMP by catalyzing the attack of water at the beta-P atom. Involved in the biosynthesis of lipid A, a phosphorylated glycolipid that anchors the lipopolysaccharide to the outer membrane of the cell. Can functionally complement lpxH deficiency in E.coli. Cannot use CDP-diacylglycerol as substrate. This Caulobacter vibrioides (strain ATCC 19089 / CIP 103742 / CB 15) (Caulobacter crescentus) protein is UDP-2,3-diacylglucosamine pyrophosphatase LpxI.